The following is a 65-amino-acid chain: Large ribosomal subunit protein bL35 (65 aa).

The protein belongs to the bacterial ribosomal protein bL35 family.

The protein is Large ribosomal subunit protein bL35 of Psychrobacter arcticus (strain DSM 17307 / VKM B-2377 / 273-4).